A 958-amino-acid chain; its full sequence is UvrABC system protein A (958 aa).

An ABC transporter 1 domain is found at 1 to 232 (MQSKSIKIQG…IETALKLGEG (232 aa)). 33 to 40 (GLSGSGKS) serves as a coordination point for ATP. The C4-type zinc-finger motif lies at 252–279 (CPICGFSIGELEPRLFSFNSPFGACPSC). 2 consecutive ABC transporter domains span residues 315–593 (QYYP…KYLS) and 604–935 (RRKP…GKYL). Residue 639-646 (GVSGSGKS) coordinates ATP. The C4-type zinc-finger motif lies at 738-764 (CEACRGDGILKIEMHFLPDVYVPCEVC).

Belongs to the ABC transporter superfamily. UvrA family. As to quaternary structure, forms a heterotetramer with UvrB during the search for lesions.

It is found in the cytoplasm. The UvrABC repair system catalyzes the recognition and processing of DNA lesions. UvrA is an ATPase and a DNA-binding protein. A damage recognition complex composed of 2 UvrA and 2 UvrB subunits scans DNA for abnormalities. When the presence of a lesion has been verified by UvrB, the UvrA molecules dissociate. This is UvrABC system protein A from Oceanobacillus iheyensis (strain DSM 14371 / CIP 107618 / JCM 11309 / KCTC 3954 / HTE831).